A 260-amino-acid chain; its full sequence is Phosphatidylglycerol--prolipoprotein diacylglyceryl transferase (260 aa).

The next 4 helical transmembrane spans lie at Val17 to Phe37, Leu52 to Ile72, Ile85 to Trp105, and Phe113 to Gly133. Arg134 contacts a 1,2-diacyl-sn-glycero-3-phospho-(1'-sn-glycerol). 3 helical membrane passes run Val170–Ile190, Gly198–Val218, and Gly227–Ile247.

Belongs to the Lgt family.

It is found in the cell membrane. The catalysed reaction is L-cysteinyl-[prolipoprotein] + a 1,2-diacyl-sn-glycero-3-phospho-(1'-sn-glycerol) = an S-1,2-diacyl-sn-glyceryl-L-cysteinyl-[prolipoprotein] + sn-glycerol 1-phosphate + H(+). It functions in the pathway protein modification; lipoprotein biosynthesis (diacylglyceryl transfer). Catalyzes the transfer of the diacylglyceryl group from phosphatidylglycerol to the sulfhydryl group of the N-terminal cysteine of a prolipoprotein, the first step in the formation of mature lipoproteins. This chain is Phosphatidylglycerol--prolipoprotein diacylglyceryl transferase, found in Dehalococcoides mccartyi (strain ATCC BAA-2266 / KCTC 15142 / 195) (Dehalococcoides ethenogenes (strain 195)).